The sequence spans 192 residues: MGVPERPTLLLLLSLLLIPLGLPVLCAPPRLICDSRVLERYILEAKEAENVTMGCAEGPRLSENITVPDTKVNFYAWKRMKVEEQAVEVWQGLSLLSEAILQAQALQANSSQPPESLQLHIDKAISGLRSLTSLLRVLGAQKELMSPPDATQAAPLRTLTADTFCKLFRVYSNFLRGKLKLYTGEACRRGDR.

The N-terminal stretch at 1 to 26 (MGVPERPTLLLLLSLLLIPLGLPVLC) is a signal peptide. Cysteines 33 and 187 form a disulfide. N-linked (GlcNAc...) asparagine glycosylation is found at asparagine 50, asparagine 64, and asparagine 109.

This sequence belongs to the EPO/TPO family. In terms of tissue distribution, produced by kidney or liver of adult mammals and by liver of fetal or neonatal mammals.

The protein localises to the secreted. In terms of biological role, hormone involved in the regulation of erythrocyte proliferation and differentiation and the maintenance of a physiological level of circulating erythrocyte mass. Binds to EPOR leading to EPOR dimerization and JAK2 activation thereby activating specific downstream effectors, including STAT1 and STAT3. The chain is Erythropoietin (Epo) from Rattus norvegicus (Rat).